Here is a 599-residue protein sequence, read N- to C-terminus: Fructan 1-exohydrolase (599 aa).

Positions 1-16 are cleaved as a signal peptide; it reads MAQAWAFLLLPALALA. The active site involves D78. N171, N239, and N251 each carry an N-linked (GlcNAc...) asparagine glycan. A disulfide bridge connects residues C449 and C495.

This sequence belongs to the glycosyl hydrolase 32 family.

The enzyme catalyses Hydrolysis of terminal, non-reducing (2-&gt;1)-linked beta-D-fructofuranose residues in fructans.. Inhibited by sucrose. In terms of biological role, hydrolyzes inulin-type beta-(2,1)-fructans. May play a role as a beta-(2,1)-trimmer during graminan biosynthesis. The chain is Fructan 1-exohydrolase from Hordeum vulgare (Barley).